The sequence spans 179 residues: Adenine phosphoribosyltransferase (179 aa).

This sequence belongs to the purine/pyrimidine phosphoribosyltransferase family. Homodimer.

Its subcellular location is the cytoplasm. It catalyses the reaction AMP + diphosphate = 5-phospho-alpha-D-ribose 1-diphosphate + adenine. It participates in purine metabolism; AMP biosynthesis via salvage pathway; AMP from adenine: step 1/1. Functionally, catalyzes a salvage reaction resulting in the formation of AMP, that is energically less costly than de novo synthesis. The chain is Adenine phosphoribosyltransferase from Mycolicibacterium gilvum (strain PYR-GCK) (Mycobacterium gilvum (strain PYR-GCK)).